A 51-amino-acid chain; its full sequence is Sperm protamine P1 (51 aa).

This sequence belongs to the protamine P1 family. Cross-linked by interchain disulfide bonds around the DNA-helix. In terms of tissue distribution, testis.

The protein localises to the nucleus. It is found in the chromosome. Protamines substitute for histones in the chromatin of sperm during the haploid phase of spermatogenesis. They compact sperm DNA into a highly condensed, stable and inactive complex. This chain is Sperm protamine P1 (PRM1), found in Hylobates lar (Lar gibbon).